The sequence spans 102 residues: Small ribosomal subunit protein uS10 (102 aa).

This sequence belongs to the universal ribosomal protein uS10 family. Part of the 30S ribosomal subunit.

Its function is as follows. Involved in the binding of tRNA to the ribosomes. This chain is Small ribosomal subunit protein uS10, found in Tropheryma whipplei (strain TW08/27) (Whipple's bacillus).